A 195-amino-acid polypeptide reads, in one-letter code: Dynactin subunit 6 (195 aa).

It belongs to the dynactin subunits 5/6 family. Dynactin subunit 6 subfamily. As to quaternary structure, member of the pointed-end complex of the dynactin shoulder complex which contains dctn4, dctn5 and dctn6 subunits and Actr10. Within the complex dctn6 forms a heterodimer with dctn5. Interacts with plk1.

The protein resides in the cytoplasm. It is found in the cytoskeleton. It localises to the chromosome. Its subcellular location is the centromere. The protein localises to the kinetochore. Part of the dynactin complex that activates the molecular motor dynein for ultra-processive transport along microtubules. The chain is Dynactin subunit 6 (dctn6) from Danio rerio (Zebrafish).